A 164-amino-acid polypeptide reads, in one-letter code: UPF0304 protein NT01EI_2691 (164 aa).

The protein belongs to the UPF0304 family.

The sequence is that of UPF0304 protein NT01EI_2691 from Edwardsiella ictaluri (strain 93-146).